Reading from the N-terminus, the 569-residue chain is Proline--tRNA ligase (569 aa).

This sequence belongs to the class-II aminoacyl-tRNA synthetase family. ProS type 1 subfamily. In terms of assembly, homodimer.

Its subcellular location is the cytoplasm. It carries out the reaction tRNA(Pro) + L-proline + ATP = L-prolyl-tRNA(Pro) + AMP + diphosphate. Functionally, catalyzes the attachment of proline to tRNA(Pro) in a two-step reaction: proline is first activated by ATP to form Pro-AMP and then transferred to the acceptor end of tRNA(Pro). As ProRS can inadvertently accommodate and process non-cognate amino acids such as alanine and cysteine, to avoid such errors it has two additional distinct editing activities against alanine. One activity is designated as 'pretransfer' editing and involves the tRNA(Pro)-independent hydrolysis of activated Ala-AMP. The other activity is designated 'posttransfer' editing and involves deacylation of mischarged Ala-tRNA(Pro). The misacylated Cys-tRNA(Pro) is not edited by ProRS. The sequence is that of Proline--tRNA ligase from Legionella pneumophila (strain Lens).